We begin with the raw amino-acid sequence, 197 residues long: GTP cyclohydrolase-2 (197 aa).

49–53 (RVHSE) provides a ligand contact to GTP. Residues C54, C65, and C67 each contribute to the Zn(2+) site. GTP-binding positions include Q70, 92-94 (EGR), and T114. The active-site Proton acceptor is the D126. R128 acts as the Nucleophile in catalysis. 2 residues coordinate GTP: T149 and K154.

Belongs to the GTP cyclohydrolase II family. In terms of assembly, homodimer. Zn(2+) is required as a cofactor.

The enzyme catalyses GTP + 4 H2O = 2,5-diamino-6-hydroxy-4-(5-phosphoribosylamino)-pyrimidine + formate + 2 phosphate + 3 H(+). The protein operates within cofactor biosynthesis; riboflavin biosynthesis; 5-amino-6-(D-ribitylamino)uracil from GTP: step 1/4. Catalyzes the conversion of GTP to 2,5-diamino-6-ribosylamino-4(3H)-pyrimidinone 5'-phosphate (DARP), formate and pyrophosphate. In Pectobacterium atrosepticum (strain SCRI 1043 / ATCC BAA-672) (Erwinia carotovora subsp. atroseptica), this protein is GTP cyclohydrolase-2.